The following is a 471-amino-acid chain: Maintenance of mitochondrial morphology protein 1 (471 aa).

Residues methionine 1–glycine 21 lie on the Lumenal side of the membrane. A helical transmembrane segment spans residues leucine 22 to phenylalanine 42. At glycine 43–alanine 471 the chain is on the cytoplasmic side. One can recognise an SMP-LTD domain in the interval glutamine 128–proline 370. Disordered stretches follow at residues glycine 271–serine 306, glutamate 395–glycine 415, and arginine 448–alanine 471. A compositionally biased stretch (basic and acidic residues) spans proline 280–proline 295. Residues alanine 401–asparagine 410 are compositionally biased toward polar residues.

The protein belongs to the MMM1 family. Homodimer. Component of the ER-mitochondria encounter structure (ERMES) or MDM complex, composed of MMM1, MDM10, MDM12 and MDM34. An MMM1 homodimer associates with one molecule of MDM12 on each side in a pairwise head-to-tail manner, and the SMP-LTD domains of MMM1 and MDM12 generate a continuous hydrophobic tunnel for phospholipid trafficking.

It localises to the endoplasmic reticulum membrane. Component of the ERMES/MDM complex, which serves as a molecular tether to connect the endoplasmic reticulum (ER) and mitochondria. Components of this complex are involved in the control of mitochondrial shape and protein biogenesis, and function in nonvesicular lipid trafficking between the ER and mitochondria. The MDM12-MMM1 subcomplex functions in the major beta-barrel assembly pathway that is responsible for biogenesis of all outer membrane beta-barrel proteins, and acts in a late step after the SAM complex. The MDM10-MDM12-MMM1 subcomplex further acts in the TOM40-specific pathway after the action of the MDM12-MMM1 complex. Essential for establishing and maintaining the structure of mitochondria and maintenance of mtDNA nucleoids. This is Maintenance of mitochondrial morphology protein 1 from Arthroderma otae (strain ATCC MYA-4605 / CBS 113480) (Microsporum canis).